Consider the following 187-residue polypeptide: dCTP deaminase, dUMP-forming (187 aa).

DCTP is bound by residues 101–106, Asp119, 127–129, Gln148, Tyr162, Lys170, and Gln174; these read KSSLGR and TLE. The active-site Proton donor/acceptor is the Glu129.

The protein belongs to the dCTP deaminase family. As to quaternary structure, homotrimer.

The enzyme catalyses dCTP + 2 H2O = dUMP + NH4(+) + diphosphate. The protein operates within pyrimidine metabolism; dUMP biosynthesis; dUMP from dCTP: step 1/1. Bifunctional enzyme that catalyzes both the deamination of dCTP to dUTP and the hydrolysis of dUTP to dUMP without releasing the toxic dUTP intermediate. This is dCTP deaminase, dUMP-forming from Corynebacterium diphtheriae (strain ATCC 700971 / NCTC 13129 / Biotype gravis).